Here is a 192-residue protein sequence, read N- to C-terminus: GTP cyclohydrolase-2 (192 aa).

47–51 is a GTP binding site; that stretch reads RIHSE. Zn(2+) contacts are provided by cysteine 52, cysteine 63, and cysteine 65. GTP is bound by residues glutamine 68, 90-92, and threonine 112; that span reads EGR. The active-site Proton acceptor is the aspartate 124. Catalysis depends on arginine 126, which acts as the Nucleophile. The GTP site is built by threonine 147 and lysine 152.

This sequence belongs to the GTP cyclohydrolase II family. Requires Zn(2+) as cofactor.

The catalysed reaction is GTP + 4 H2O = 2,5-diamino-6-hydroxy-4-(5-phosphoribosylamino)-pyrimidine + formate + 2 phosphate + 3 H(+). The protein operates within cofactor biosynthesis; riboflavin biosynthesis; 5-amino-6-(D-ribitylamino)uracil from GTP: step 1/4. Catalyzes the conversion of GTP to 2,5-diamino-6-ribosylamino-4(3H)-pyrimidinone 5'-phosphate (DARP), formate and pyrophosphate. This is GTP cyclohydrolase-2 from Picrophilus torridus (strain ATCC 700027 / DSM 9790 / JCM 10055 / NBRC 100828 / KAW 2/3).